A 239-amino-acid chain; its full sequence is MVDAKQVRFIIGVIGNVISFGLFAAPAKTFWRIFKKKSVEEFSYVPYVATVMNCMLWVFYGLPVVHKDSILVSTINGVGLVIELFYVGVYLMYCGHKKNHRRNILGFLALEVILVVAIILITLFALKGDFVKQTFVGVICDVFNIAMYGAPSLAIIKVVKTKSVEYMPFLLSLVCFVNAGIWTTYSLIFKIDYYVLASNGIGTFLALSQLIVYFMYYKSTPKEKTVKPSEVEISATERV.

Topologically, residues 1 to 6 (MVDAKQ) are extracellular. Residues 7–27 (VRFIIGVIGNVISFGLFAAPA) traverse the membrane as a helical segment. In terms of domain architecture, MtN3/slv 1 spans 9–98 (FIIGVIGNVI…VYLMYCGHKK (90 aa)). Topologically, residues 28-44 (KTFWRIFKKKSVEEFSY) are cytoplasmic. Residues 45–65 (VPYVATVMNCMLWVFYGLPVV) traverse the membrane as a helical segment. Topologically, residues 66–69 (HKDS) are extracellular. A helical transmembrane segment spans residues 70–90 (ILVSTINGVGLVIELFYVGVY). Residues 91 to 103 (LMYCGHKKNHRRN) are Cytoplasmic-facing. The chain crosses the membrane as a helical span at residues 104–124 (ILGFLALEVILVVAIILITLF). The Extracellular portion of the chain corresponds to 125-135 (ALKGDFVKQTF). In terms of domain architecture, MtN3/slv 2 spans 134 to 185 (TFVGVICDVFNIAMYGAPSLAIIKVVKTKSVEYMPFLLSLVCFVNAGIWTTY). The chain crosses the membrane as a helical span at residues 136-156 (VGVICDVFNIAMYGAPSLAII). At 157–168 (KVVKTKSVEYMP) the chain is on the cytoplasmic side. Residues 169–189 (FLLSLVCFVNAGIWTTYSLIF) traverse the membrane as a helical segment. Over 190-194 (KIDYY) the chain is Extracellular. The helical transmembrane segment at 195 to 215 (VLASNGIGTFLALSQLIVYFM) threads the bilayer. Over 216 to 239 (YYKSTPKEKTVKPSEVEISATERV) the chain is Cytoplasmic.

Belongs to the SWEET sugar transporter family. As to quaternary structure, forms homooligomers and heterooligomers with SWEET4, SWEET5, SWEET6, SWEET7, SWEET9, SWEET10, SWEET11, SWEET13, SWEET15, SWEET16 and SWEET17. In terms of tissue distribution, expressed in inflorescences, embryo sacs and pollen, and at a lower level in stems. Barely detected in roots, leaves and seedlings.

Its subcellular location is the cell membrane. Mediates both low-affinity uptake and efflux of sugar across the plasma membrane. Required, in pollen, for microspore cell integrity and primexine pattern formation. This chain is Bidirectional sugar transporter SWEET8, found in Arabidopsis thaliana (Mouse-ear cress).